The following is a 295-amino-acid chain: MTTETGTWTVKKGLAEMLKGGVIMDVTTPEQAKIAEEAGACAVMALERVPADIRAAGGVARMADPTVILRIMDAVTIPVMAKARIGHFVEAQVLESLGIDYIDESEVLTPADDLFHINKNDFKVPFVCGARNLGEALRRIGEGAAMIRTKGEPGTGNVVEAVRHARQVMSEIRKLTTLPKEERMSFAKEIGAPYELVCLVAETGRLPVVNFAAGGIATPADAALMMQLGVDGVFVGSGIFKSGDPIRRAKAIVAATTHYNDPKVIAEVSKDLGEPMVGIEIPTIPAEQRMQERGW.

Residue D25 coordinates D-ribose 5-phosphate. Catalysis depends on K82, which acts as the Schiff-base intermediate with D-ribose 5-phosphate. G154 contributes to the D-ribose 5-phosphate binding site. D-glyceraldehyde 3-phosphate is bound at residue R166. Residues G215 and 236–237 contribute to the D-ribose 5-phosphate site; that span reads GS.

This sequence belongs to the PdxS/SNZ family. As to quaternary structure, in the presence of PdxT, forms a dodecamer of heterodimers.

The enzyme catalyses aldehydo-D-ribose 5-phosphate + D-glyceraldehyde 3-phosphate + L-glutamine = pyridoxal 5'-phosphate + L-glutamate + phosphate + 3 H2O + H(+). The protein operates within cofactor biosynthesis; pyridoxal 5'-phosphate biosynthesis. Its function is as follows. Catalyzes the formation of pyridoxal 5'-phosphate from ribose 5-phosphate (RBP), glyceraldehyde 3-phosphate (G3P) and ammonia. The ammonia is provided by the PdxT subunit. Can also use ribulose 5-phosphate and dihydroxyacetone phosphate as substrates, resulting from enzyme-catalyzed isomerization of RBP and G3P, respectively. The polypeptide is Pyridoxal 5'-phosphate synthase subunit PdxS (Heliobacterium modesticaldum (strain ATCC 51547 / Ice1)).